The chain runs to 419 residues: MDKSLEEKLMEQGKKAKAASRFLATASTTLKNEALLKTADALEAQGAEIVAANAIDLELGEKQGLTPALLERLALNESRIKDMAQGLREIAALPDPVGEVLGMWRRPNGLEVGRIRTPIGVIGIIYESRPNVTADAAGLCLKAGNAILLRGGEEALNSNRIIARIIAQSAKDCGIPEGAVQLVDSEDRQAAVYMMKMNDYLDVLIPRGGKGLKQAVLEHASVPVIMTGMGNCHVYVDALADLSKAQKIVFNAKVQRPSVCNAAETLLVNAKIAGDFLPAMIAELKGAGVEIRGCERSREIVPDILPAREEDWDEEYLDLILAVKVLDSVEDAIEHINCHGTGHSEAIISEDYSSVRRFISAVDAAAVYANASTRFTDGNVFGFGAEMGISTQKLHARGPMGLQELTTTKFIIYGDGQIR.

The protein belongs to the gamma-glutamyl phosphate reductase family.

It localises to the cytoplasm. It catalyses the reaction L-glutamate 5-semialdehyde + phosphate + NADP(+) = L-glutamyl 5-phosphate + NADPH + H(+). It functions in the pathway amino-acid biosynthesis; L-proline biosynthesis; L-glutamate 5-semialdehyde from L-glutamate: step 2/2. Functionally, catalyzes the NADPH-dependent reduction of L-glutamate 5-phosphate into L-glutamate 5-semialdehyde and phosphate. The product spontaneously undergoes cyclization to form 1-pyrroline-5-carboxylate. This is Gamma-glutamyl phosphate reductase from Syntrophomonas wolfei subsp. wolfei (strain DSM 2245B / Goettingen).